The sequence spans 174 residues: MTKLIIMTICLIISFIFMQMKHPLSMGLMLLTQTFLTCLLTGIYVKTFWFSYVLFLIFLGGMLILFIYVHSLSSNEMFTMSFNLTTLSLLIFFLMTLFFFIIDKSLIEQFISNMEMEMFSFNNNLINENILFLNKMYNFPTNLITLLLINYLFLTLLVTVKITKKFYGPLRPMN.

Helical transmembrane passes span 4–24, 25–45, 48–68, 82–102, and 143–163; these read LIIMTICLIISFIFMQMKHPL, SMGLMLLTQTFLTCLLTGIYV, FWFSYVLFLIFLGGMLILFIY, FNLTTLSLLIFFLMTLFFFII, and LITLLLINYLFLTLLVTVKIT.

The protein belongs to the complex I subunit 6 family.

It localises to the mitochondrion membrane. The enzyme catalyses a ubiquinone + NADH + 5 H(+)(in) = a ubiquinol + NAD(+) + 4 H(+)(out). Functionally, core subunit of the mitochondrial membrane respiratory chain NADH dehydrogenase (Complex I) that is believed to belong to the minimal assembly required for catalysis. Complex I functions in the transfer of electrons from NADH to the respiratory chain. The immediate electron acceptor for the enzyme is believed to be ubiquinone. The chain is NADH-ubiquinone oxidoreductase chain 6 (ND6) from Anopheles quadrimaculatus (Common malaria mosquito).